We begin with the raw amino-acid sequence, 201 residues long: Ribosomal RNA large subunit methyltransferase E (201 aa).

Residues Gly-40, Trp-42, Asp-62, Asp-78, and Asp-101 each contribute to the S-adenosyl-L-methionine site. Lys-141 (proton acceptor) is an active-site residue.

The protein belongs to the class I-like SAM-binding methyltransferase superfamily. RNA methyltransferase RlmE family.

Its subcellular location is the cytoplasm. It carries out the reaction uridine(2552) in 23S rRNA + S-adenosyl-L-methionine = 2'-O-methyluridine(2552) in 23S rRNA + S-adenosyl-L-homocysteine + H(+). Functionally, specifically methylates the uridine in position 2552 of 23S rRNA at the 2'-O position of the ribose in the fully assembled 50S ribosomal subunit. The sequence is that of Ribosomal RNA large subunit methyltransferase E from Anaplasma marginale (strain Florida).